The primary structure comprises 301 residues: Chitosanase (301 aa).

A signal peptide spans 1–42 (MHMSNARPSKSRTKFLLAFLCFTLMASLFGATALFGPSKAAA). Glutamate 79 serves as the catalytic Proton donor. An intrachain disulfide couples cysteine 92 to cysteine 166. The Nucleophile role is filled by aspartate 97.

Belongs to the glycosyl hydrolase 46 family.

The protein localises to the secreted. It catalyses the reaction Endohydrolysis of beta-(1-&gt;4)-linkages between D-glucosamine residues in a partly acetylated chitosan.. In terms of biological role, aids in the defense against invading fungal pathogens by degrading their cell wall chitosan. This chain is Chitosanase (csn), found in Niallia circulans (Bacillus circulans).